We begin with the raw amino-acid sequence, 722 residues long: Glycine--tRNA ligase beta subunit (722 aa).

It belongs to the class-II aminoacyl-tRNA synthetase family. In terms of assembly, tetramer of two alpha and two beta subunits.

Its subcellular location is the cytoplasm. It carries out the reaction tRNA(Gly) + glycine + ATP = glycyl-tRNA(Gly) + AMP + diphosphate. The chain is Glycine--tRNA ligase beta subunit (glyS) from Synechocystis sp. (strain ATCC 27184 / PCC 6803 / Kazusa).